Reading from the N-terminus, the 43-residue chain is Protein PsbN (43 aa).

A helical transmembrane segment spans residues 7–27; sequence VAIFISGLLVSFTGYALYTAF.

This sequence belongs to the PsbN family.

Its subcellular location is the plastid. The protein localises to the chloroplast thylakoid membrane. Its function is as follows. May play a role in photosystem I and II biogenesis. The protein is Protein PsbN of Sagittaria latifolia (Broadleaf arrowhead).